The following is a 751-amino-acid chain: Zinc finger protein 337 (751 aa).

Positions 12–83 (LAFGDVTVDF…ERRRRPGPCA (72 aa)) constitute a KRAB domain. A compositionally biased stretch (low complexity) spans 101–116 (QRQQQLQFSDQSFQSD). The tract at residues 101-163 (QRQQQLQFSD…SSQGQRENPT (63 aa)) is disordered. The segment at 180 to 202 (FKCAERGQDFSRKMMVIIHKKAH) adopts a C2H2-type 1; degenerate zinc-finger fold. C2H2-type zinc fingers lie at residues 208–230 (FTCR…QNTH), 236–258 (YVCS…QRTH), 264–286 (FLCK…ERTH), 292–314 (YECQ…LKAH), 320–342 (FVCK…KRIH), 348–370 (YRCQ…QRTH), 376–398 (FACR…QRTH), 404–426 (FVCK…QRTH), and 432–454 (FVCR…QITH). Residue lysine 458 forms a Glycyl lysine isopeptide (Lys-Gly) (interchain with G-Cter in SUMO2) linkage. C2H2-type zinc fingers lie at residues 460–482 (FVCK…QRTH), 488–510 (YGCR…LRAH), 516–538 (FFCR…QRTH), 544–566 (FMCK…QWTH), 572–594 (FNCK…QKTH), 600–622 (FICS…QLAH), 628–650 (FVCK…QRTH), 656–679 (FVCN…WRIH), 685–707 (FVCQ…ERIH), and 713–735 (YECQ…LKRH).

Belongs to the krueppel C2H2-type zinc-finger protein family.

The protein resides in the nucleus. May be involved in transcriptional regulation. In Homo sapiens (Human), this protein is Zinc finger protein 337 (ZNF337).